Here is a 563-residue protein sequence, read N- to C-terminus: Arginine--tRNA ligase (563 aa).

A 'HIGH' region motif is present at residues 122–132 (PNIAKPMSMGH).

This sequence belongs to the class-I aminoacyl-tRNA synthetase family. Monomer.

It localises to the cytoplasm. It carries out the reaction tRNA(Arg) + L-arginine + ATP = L-arginyl-tRNA(Arg) + AMP + diphosphate. In Ligilactobacillus salivarius (strain UCC118) (Lactobacillus salivarius), this protein is Arginine--tRNA ligase.